The sequence spans 230 residues: Sugar fermentation stimulation protein homolog (230 aa).

Belongs to the SfsA family.

This chain is Sugar fermentation stimulation protein homolog, found in Clostridium kluyveri (strain NBRC 12016).